Here is a 574-residue protein sequence, read N- to C-terminus: DNA mismatch repair protein MutL (574 aa).

It belongs to the DNA mismatch repair MutL/HexB family.

Its function is as follows. This protein is involved in the repair of mismatches in DNA. It is required for dam-dependent methyl-directed DNA mismatch repair. May act as a 'molecular matchmaker', a protein that promotes the formation of a stable complex between two or more DNA-binding proteins in an ATP-dependent manner without itself being part of a final effector complex. In Coxiella burnetii (strain RSA 331 / Henzerling II), this protein is DNA mismatch repair protein MutL.